The following is a 121-amino-acid chain: Small ribosomal subunit protein uS13 (121 aa).

The interval 93–121 (RKGLPVRGQKTKTNARTRKGKRKTVGAKS) is disordered.

It belongs to the universal ribosomal protein uS13 family. In terms of assembly, part of the 30S ribosomal subunit. Forms a loose heterodimer with protein S19. Forms two bridges to the 50S subunit in the 70S ribosome.

Its function is as follows. Located at the top of the head of the 30S subunit, it contacts several helices of the 16S rRNA. In the 70S ribosome it contacts the 23S rRNA (bridge B1a) and protein L5 of the 50S subunit (bridge B1b), connecting the 2 subunits; these bridges are implicated in subunit movement. Contacts the tRNAs in the A and P-sites. The chain is Small ribosomal subunit protein uS13 from Campylobacter lari (strain RM2100 / D67 / ATCC BAA-1060).